Here is a 215-residue protein sequence, read N- to C-terminus: UPF0502 protein YceH (215 aa).

The protein belongs to the UPF0502 family.

The sequence is that of UPF0502 protein YceH from Salmonella paratyphi A (strain ATCC 9150 / SARB42).